The chain runs to 129 residues: Tumor necrosis factor receptor superfamily member 12A (129 aa).

An N-terminal signal peptide occupies residues 1 to 27; the sequence is MARGSLRRLLRLLVLGLWLALLRSVAG. Topologically, residues 28–80 are extracellular; that stretch reads EQAPGTAPCSRGSSWSADLDKCMDCASCRARPHSDFCLGCAAAPPAPFRLLWP. 3 cysteine pairs are disulfide-bonded: cysteine 36-cysteine 49, cysteine 52-cysteine 67, and cysteine 55-cysteine 64. The stretch at 36–67 is one TNFR-Cys; atypical repeat; that stretch reads CSRGSSWSADLDKCMDCASCRARPHSDFCLGC. The helical transmembrane segment at 81 to 101 threads the bilayer; it reads ILGGALSLTFVLGLLSGFLVW. Topologically, residues 102–129 are cytoplasmic; that stretch reads RRCRRREKFTTPIEETGGEGCPAVALIQ.

Associates with TRAF1 and TRAF2, and probably also with TRAF3. As to expression, highly expressed in heart, placenta and kidney. Intermediate expression in lung, skeletal muscle and pancreas.

The protein localises to the membrane. In terms of biological role, receptor for TNFSF12/TWEAK. Weak inducer of apoptosis in some cell types. Promotes angiogenesis and the proliferation of endothelial cells. May modulate cellular adhesion to matrix proteins. This Homo sapiens (Human) protein is Tumor necrosis factor receptor superfamily member 12A (TNFRSF12A).